Here is a 399-residue protein sequence, read N- to C-terminus: MNVVLSKSALENVSKHKYSGIDDSILAKLILQKYWNFCLKFVPLNIAPYLITLTGTITILLSFFIVGYYSPYLEGTLPRWVYAMSGLTLFFYQTMDNLDGKQARRTGSSSPLGQLFDHGCDSIVCTLQSLIVASVANYGVGYISLIQLFITALLPFWMATWEEYHTGVLHLGPINGPDEGIIIIVCALLSTAIFGNAFWTFKPFVASSQLLPSIIQQWLPTFIQQLMLNEIIVASLSLPCLITCFFNIKNVVQHLQAKQKPILPALKHILVWVIITVSSFIWYYTSTNLLPLSSIWFNNIRTVQFSIGIIFGELVSRLILAHMCHEKYNIIQAPLYPLILSTFCSTINYFNGTIIIPENLLLILFTVTSFVHYSLFVKSTISQLCSYLNIKCFTITKKH.

Helical transmembrane passes span 46-66 (IAPY…FFIV), 76-95 (TLPR…YQTM), 139-159 (GVGY…FWMA), 181-201 (IIII…FWTF), 226-246 (LMLN…TCFF), 262-282 (ILPA…SFIW), 303-323 (VQFS…LAHM), 330-350 (IIQA…INYF), and 352-372 (GTII…SFVH).

It belongs to the CDP-alcohol phosphatidyltransferase class-I family.

Its subcellular location is the membrane. This is an uncharacterized protein from Dictyostelium discoideum (Social amoeba).